A 960-amino-acid chain; its full sequence is Dynamin-like GTPase OPA1, mitochondrial (960 aa).

The N-terminal 87 residues, 1–87, are a transit peptide targeting the mitochondrion; it reads MWRAGRAAVA…IKYGYQPRRN (87 aa). At 88–96 the chain is on the mitochondrial matrix side; it reads FWPARLAAR. Residues 97–113 traverse the membrane as a helical segment; sequence LLKLRYIILGSAVGGGY. Residues 114 to 770 lie on the Mitochondrial intermembrane side of the membrane; sequence TAKKTFDEWK…NAIENMIGPD (657 aa). Residues 210 to 254 adopt a coiled-coil conformation; the sequence is SDKEKIDQLQEELLHTQLKYQRILERLEKENKELRKLVLQKDDKG. The short motif at 217-222 is the LQQQIQ motif element; that stretch reads QLQEEL. The residue at position 228 (Lys228) is an N6-acetyllysine. One can recognise a Dynamin-type G domain in the interval 285-561; the sequence is QDHLPRVVVV…FWKMVRESVE (277 aa). The interval 295 to 302 is G1 motif; the sequence is GDQSAGKT. GTP is bound by residues Ser298, Gly300, Lys301, Thr302, Ser303, and Gly317. Thr302 contacts Mg(2+). The segment at 321–324 is G2 motif; sequence MMTR. Positions 323 and 398 each coordinate Mg(2+). Residues 398-401 are G3 motif; sequence DLPG. A G4 motif region spans residues 467–470; sequence TKVD. GTP-binding residues include Lys468, Asp470, and Thr503. The interval 501 to 504 is G5 motif; the sequence is VVTG. 2 stalk region regions span residues 589–836 and 874–928; these read DRNE…IKDT and CNDV…VKLL. The paddle region stretch occupies residues 736 to 856; it reads SDKQQWDAAI…KTALNHCNLC (121 aa). Residues 771–781 lie within the membrane without spanning it; that stretch reads WKKRWMYWKNR. Residues 782–960 are Mitochondrial intermembrane-facing; it reads TQEQCVHNET…AFIEALHQEK (179 aa). The cysteines at positions 856 and 874 are disulfide-linked. Positions 895–960 form a coiled coil; the sequence is RQQLTNTEVR…AFIEALHQEK (66 aa).

It belongs to the TRAFAC class dynamin-like GTPase superfamily. Dynamin/Fzo/YdjA family. Oligomeric complex consisting of membrane-bound and soluble forms of OPA1. Interacts with RCC1L; RCC1L acts as a guanine nucleotide exchange factor (GEF) for OPA1 by exchanging bound GDP for free GTP. Interacts with CHCHD3 and IMMT; these interactions occur preferentially with soluble OPA1 forms. Interacts with PRELID1. In terms of processing, cleaved by OMA1 or YME1L downstream of the transmembrane region in response to different signals to generate soluble forms. Cleaved by OMA1 at position S1 following stress conditions, generating the short soluble form (Dynamin-like GTPase OPA1, short form; S-OPA1). AFG3L2 is involved in the regulation of OMA1-dependent processing of OPA1. PARL-dependent proteolytic processing releases an antiapoptotic soluble form not required for mitochondrial fusion. Cleavage at position S2 by YME1L is required to mediate oxidative phosphorylation (OXPHOS)-induced mitochondrial fusion. Cleavage occurs in the sequence motif Leu-Gln-Gln-Gln-Ile-Gln (LQQQIQ). Post-translationally, cleavage at position S3 by YME1L is required for membrane tubulation. As to expression, detected in brain (at protein level). Detected in brain, brain stem, heart, kidney, liver and skeletal muscle.

The protein localises to the mitochondrion inner membrane. The protein resides in the mitochondrion intermembrane space. It carries out the reaction GTP + H2O = GDP + phosphate + H(+). Activated by guanine nucleotide exchange factor RCC1L. Its function is as follows. Dynamin-related GTPase that is essential for normal mitochondrial morphology by mediating fusion of the mitochondrial inner membranes, regulating cristae morphology and maintaining respiratory chain function. Exists in two forms: the transmembrane, long form (Dynamin-like GTPase OPA1, long form; L-OPA1), which is tethered to the inner mitochondrial membrane, and the short soluble form (Dynamin-like GTPase OPA1, short form; S-OPA1), which results from proteolytic cleavage and localizes in the intermembrane space. Both forms (L-OPA1 and S-OPA1) cooperate to catalyze the fusion of the mitochondrial inner membrane. The equilibrium between L-OPA1 and S-OPA1 is essential: excess levels of S-OPA1, produced by cleavage by OMA1 following loss of mitochondrial membrane potential, lead to an impaired equilibrium between L-OPA1 and S-OPA1, inhibiting mitochondrial fusion. The balance between L-OPA1 and S-OPA1 also influences cristae shape and morphology. Involved in remodeling cristae and the release of cytochrome c during apoptosis. Proteolytic processing by PARL in response to intrinsic apoptotic signals may lead to disassembly of OPA1 oligomers and release of the caspase activator cytochrome C (CYCS) into the mitochondrial intermembrane space. Acts as a regulator of T-helper Th17 cells, which are characterized by cells with fused mitochondria with tight cristae, by mediating mitochondrial membrane remodeling: OPA1 is required for interleukin-17 (IL-17) production. Its role in mitochondrial morphology is required for mitochondrial genome maintenance. Functionally, constitutes the transmembrane long form (L-OPA1) that plays a central role in mitochondrial inner membrane fusion and cristae morphology. L-OPA1 and the soluble short form (S-OPA1) form higher-order helical assemblies that coordinate the fusion of mitochondrial inner membranes. Inner membrane-anchored L-OPA1 molecules initiate membrane remodeling by recruiting soluble S-OPA1 to rapidly polymerize into a flexible cylindrical scaffold encaging the mitochondrial inner membrane. Once at the membrane surface, the formation of S-OPA1 helices induce bilayer curvature. OPA1 dimerization through the paddle region, which inserts into cardiolipin-containing membrane, promotes GTP hydrolysis and the helical assembly of a flexible OPA1 lattice on the membrane, which drives membrane curvature and mitochondrial fusion. Plays a role in the maintenance and remodeling of mitochondrial cristae, some invaginations of the mitochondrial inner membrane that provide an increase in the surface area. Probably acts by forming helical filaments at the inside of inner membrane tubes with the shape and dimensions of crista junctions. The equilibrium between L-OPA1 and S-OPA1 influences cristae shape and morphology: increased L-OPA1 levels promote cristae stacking and elongated mitochondria, while increased S-OPA1 levels correlated with irregular cristae packing and round mitochondria shape. In terms of biological role, constitutes the soluble short form (S-OPA1) generated by cleavage by OMA1, which plays a central role in mitochondrial inner membrane fusion and cristae morphology. The transmembrane long form (L-OPA1) and the S-OPA1 form higher-order helical assemblies that coordinate the fusion of mitochondrial inner membranes. Inner membrane-anchored L-OPA1 molecules initiate membrane remodeling by recruiting soluble S-OPA1 to rapidly polymerize into a flexible cylindrical scaffold encaging the mitochondrial inner membrane. Once at the membrane surface, the formation of S-OPA1 helices induce bilayer curvature. OPA1 dimerization through the paddle region, which inserts into cardiolipin-containing membrane, promotes GTP hydrolysis and the helical assembly of a flexible OPA1 lattice on the membrane, which drives membrane curvature and mitochondrial fusion. Excess levels of S-OPA1 produced by cleavage by OMA1 following stress conditions that induce loss of mitochondrial membrane potential, lead to an impaired equilibrium between L-OPA1 and S-OPA1, thereby inhibiting mitochondrial fusion. Involved in mitochondrial safeguard in response to transient mitochondrial membrane depolarization by mediating flickering: cleavage by OMA1 leads to excess production of S-OPA1, preventing mitochondrial hyperfusion. Plays a role in the maintenance and remodeling of mitochondrial cristae, some invaginations of the mitochondrial inner membrane that provide an increase in the surface area. Probably acts by forming helical filaments at the inside of inner membrane tubes with the shape and dimensions of crista junctions. The equilibrium between L-OPA1 and S-OPA1 influences cristae shape and morphology: increased L-OPA1 levels promote cristae stacking and elongated mitochondria, while increased S-OPA1 levels correlated with irregular cristae packing and round mitochondria shape. Isoforms that contain the alternative exon 4b are required for mitochondrial genome maintenance, possibly by anchoring the mitochondrial nucleoids to the inner mitochondrial membrane. The chain is Dynamin-like GTPase OPA1, mitochondrial from Mus musculus (Mouse).